A 179-amino-acid polypeptide reads, in one-letter code: Large ribosomal subunit protein uL5 (179 aa).

This sequence belongs to the universal ribosomal protein uL5 family. Part of the 50S ribosomal subunit; part of the 5S rRNA/L5/L18/L25 subcomplex. Contacts the 5S rRNA and the P site tRNA. Forms a bridge to the 30S subunit in the 70S ribosome.

This is one of the proteins that bind and probably mediate the attachment of the 5S RNA into the large ribosomal subunit, where it forms part of the central protuberance. In the 70S ribosome it contacts protein S13 of the 30S subunit (bridge B1b), connecting the 2 subunits; this bridge is implicated in subunit movement. Contacts the P site tRNA; the 5S rRNA and some of its associated proteins might help stabilize positioning of ribosome-bound tRNAs. The chain is Large ribosomal subunit protein uL5 from Pseudoalteromonas translucida (strain TAC 125).